A 1133-amino-acid polypeptide reads, in one-letter code: Early transcription factor large subunit homolog (1133 aa).

In terms of domain architecture, Helicase ATP-binding spans 52-352 (KGGRAFFPCD…PNGQPLQRQQ (301 aa)). 99-106 (WQTGTGKS) is an ATP binding site. Positions 281–284 (DEIH) match the DEAH box motif. A Helicase C-terminal domain is found at 524–724 (MMKDILSIIR…EGDKALRKHA (201 aa)).

It belongs to the DEAD box helicase family. DEAH subfamily.

It is found in the virion. It catalyses the reaction ATP + H2O = ADP + phosphate + H(+). Functionally, putative initation factor. In Ornithodoros (relapsing fever ticks), this protein is Early transcription factor large subunit homolog.